We begin with the raw amino-acid sequence, 298 residues long: NAD kinase (298 aa).

The Proton acceptor role is filled by Asp-80. NAD(+) is bound by residues 80 to 81 (DG), 154 to 155 (ND), Arg-182, Asp-184, 195 to 200 (TAYALS), Ala-219, and Gln-253.

The protein belongs to the NAD kinase family. A divalent metal cation is required as a cofactor.

The protein localises to the cytoplasm. The enzyme catalyses NAD(+) + ATP = ADP + NADP(+) + H(+). In terms of biological role, involved in the regulation of the intracellular balance of NAD and NADP, and is a key enzyme in the biosynthesis of NADP. Catalyzes specifically the phosphorylation on 2'-hydroxyl of the adenosine moiety of NAD to yield NADP. This Delftia acidovorans (strain DSM 14801 / SPH-1) protein is NAD kinase.